The following is a 212-amino-acid chain: Outer surface protein C (212 aa).

Positions 1–18 are cleaved as a signal peptide; sequence MKKNTLSAILMTLFLFIS. Residue cysteine 19 is the site of N-palmitoyl cysteine attachment. Cysteine 19 carries the S-diacylglycerol cysteine lipid modification.

The protein belongs to the OspC lipoprotein family. Homodimer. Interacts with tick Ixodes ricinus salivary protein Iric-1. Binds human (host) plasminogen. In terms of processing, the N-terminus is blocked.

It is found in the cell outer membrane. Its subcellular location is the cell surface. Major immunodominant protein in mammalian hosts. Required for initial stages of mammalian infection. Inhibits macrophage-mediated phagocytosis of the bacteria. Binds human plasminogen; this probably confers an extracellular protease activity on the bacteria that allows it to traverse tissue. Unlike closely related strain B31, its interaction with Ixodes ricinus salivary protein Iric-1 does not protect against antibody-mediated destruction in vitro. The protein is Outer surface protein C of Borreliella afzelii (strain PKo) (Borrelia afzelii).